Consider the following 134-residue polypeptide: Small ribosomal subunit protein uS8c (134 aa).

This sequence belongs to the universal ribosomal protein uS8 family. In terms of assembly, part of the 30S ribosomal subunit.

The protein localises to the plastid. Functionally, one of the primary rRNA binding proteins, it binds directly to 16S rRNA central domain where it helps coordinate assembly of the platform of the 30S subunit. In Epifagus virginiana (Beechdrops), this protein is Small ribosomal subunit protein uS8c (rps8).